We begin with the raw amino-acid sequence, 496 residues long: Probable cytosol aminopeptidase (496 aa).

Mn(2+) is bound by residues K266 and D271. K278 is a catalytic residue. The Mn(2+) site is built by D290, D349, and E351. Residue R353 is part of the active site.

This sequence belongs to the peptidase M17 family. Requires Mn(2+) as cofactor.

Its subcellular location is the cytoplasm. It catalyses the reaction Release of an N-terminal amino acid, Xaa-|-Yaa-, in which Xaa is preferably Leu, but may be other amino acids including Pro although not Arg or Lys, and Yaa may be Pro. Amino acid amides and methyl esters are also readily hydrolyzed, but rates on arylamides are exceedingly low.. The catalysed reaction is Release of an N-terminal amino acid, preferentially leucine, but not glutamic or aspartic acids.. Its function is as follows. Presumably involved in the processing and regular turnover of intracellular proteins. Catalyzes the removal of unsubstituted N-terminal amino acids from various peptides. This is Probable cytosol aminopeptidase from Trichodesmium erythraeum (strain IMS101).